Consider the following 327-residue polypeptide: Acetaldehyde dehydrogenase 6 (327 aa).

An NAD(+)-binding site is contributed by 15–18 (SGNI). Cys133 serves as the catalytic Acyl-thioester intermediate. Residues 164–172 (SAGPGTRAN) and Asn297 contribute to the NAD(+) site.

The protein belongs to the acetaldehyde dehydrogenase family.

The catalysed reaction is acetaldehyde + NAD(+) + CoA = acetyl-CoA + NADH + H(+). In Rhodococcus opacus (strain B4), this protein is Acetaldehyde dehydrogenase 6.